We begin with the raw amino-acid sequence, 185 residues long: Intraflagellar transport protein 22 homolog (185 aa).

GTP-binding positions include 10–17, 63–67, and 123–126; these read GPCESGKT, DCGGD, and HKPG. Residue Ser-137 is modified to Phosphoserine.

The protein belongs to the small GTPase superfamily. Rab family. Component of the IFT complex B, at least composed of IFT20, IFT22, IFT25, IFT27, IFT46, IFT52, TRAF3IP1/IFT54, IFT57, IFT74, IFT80, IFT81, and IFT88. Interacts with IFT88. Interacts with CFAP61.

It localises to the cell projection. Its subcellular location is the cilium. Small GTPase-like component of the intraflagellar transport (IFT) complex B. The sequence is that of Intraflagellar transport protein 22 homolog (IFT22) from Macaca fascicularis (Crab-eating macaque).